The sequence spans 240 residues: Myomodulin neuropeptides 2 (240 aa).

The signal sequence occupies residues 1–23 (MWKILETCSCFLVVAVLSGLGKA). A disordered region spans residues 23–44 (AQPESFSGSAVTDDSTSGANKR). A propeptide spanning residues 24–44 (QPESFSGSAVTDDSTSGANKR) is cleaved from the precursor. The segment covering 26-41 (ESFSGSAVTDDSTSGA) has biased composition (polar residues). Leucine 51 and leucine 60 each carry leucine amide. 2 propeptides (connecting peptide) span residues 72–81 (SGHQVPMLRA) and 84–112 (GSPD…RDQS). Alanine 81 carries the alanine amide modification. At glutamine 115 the chain carries Pyrrolidone carboxylic acid. Residue tyrosine 121 is modified to Tyrosine amide. 10 consecutive propeptides (connecting peptide) follow at residues 124-147 (DNNG…SNFD), 124-148 (DNNG…NFDL), 124-149 (DNNG…FDLL), 124-168 (DNNG…GGRY), 131-168 (DLLD…GGRY), 149-168 (LSSL…GGRY), 150-168 (SSLN…GGRY), 151-168 (SLNN…GGRY), 171-190 (SLPD…LVQS), and 171-199 (SLPD…PYSS). Isoleucine 207 carries the isoleucine amide modification. A propeptide spanning residues 210–219 (FSGSPRLQAK) is cleaved from the precursor. The segment at 212-240 (GSPRLQAKAVPRPRIGRQESQMREAKSAE) is disordered. Isoleucine amide is present on isoleucine 226. The propeptide occupies 227 to 240 (GRQESQMREAKSAE). The span at 227–240 (GRQESQMREAKSAE) shows a compositional bias: basic and acidic residues.

In terms of tissue distribution, expressed in the pedal-buccal projection neurons in the pedal ganglion.

It is found in the secreted. Its function is as follows. MMG2-DPs (Myomodulin gene 2-derived peptides) bias egestive feeding programs toward ingestive ones, and modulate accessory radula closer (ARC) muscle contractions. The chain is Myomodulin neuropeptides 2 (MMG2) from Aplysia californica (California sea hare).